Reading from the N-terminus, the 130-residue chain is Small ribosomal subunit protein uS8 (130 aa).

This sequence belongs to the universal ribosomal protein uS8 family. Part of the 30S ribosomal subunit. Contacts proteins S5 and S12.

Functionally, one of the primary rRNA binding proteins, it binds directly to 16S rRNA central domain where it helps coordinate assembly of the platform of the 30S subunit. The protein is Small ribosomal subunit protein uS8 of Phytoplasma australiense.